The primary structure comprises 396 residues: Phosphopentomutase (396 aa).

Mn(2+) is bound by residues D13, D288, H293, D329, H330, and H341.

The protein belongs to the phosphopentomutase family. Requires Mn(2+) as cofactor.

The protein resides in the cytoplasm. It catalyses the reaction 2-deoxy-alpha-D-ribose 1-phosphate = 2-deoxy-D-ribose 5-phosphate. The catalysed reaction is alpha-D-ribose 1-phosphate = D-ribose 5-phosphate. Its pathway is carbohydrate degradation; 2-deoxy-D-ribose 1-phosphate degradation; D-glyceraldehyde 3-phosphate and acetaldehyde from 2-deoxy-alpha-D-ribose 1-phosphate: step 1/2. Its function is as follows. Isomerase that catalyzes the conversion of deoxy-ribose 1-phosphate (dRib-1-P) and ribose 1-phosphate (Rib-1-P) to deoxy-ribose 5-phosphate (dRib-5-P) and ribose 5-phosphate (Rib-5-P), respectively. The protein is Phosphopentomutase of Clostridium beijerinckii (strain ATCC 51743 / NCIMB 8052) (Clostridium acetobutylicum).